A 312-amino-acid chain; its full sequence is Taste receptor type 2 member 62 (312 aa).

Residues 1–4 (MPSL) lie on the Extracellular side of the membrane. Residues 5–27 (PTLIFIAIFCLESLAAMLQNGFL) traverse the membrane as a helical segment. The Cytoplasmic segment spans residues 28 to 39 (VTMLGREWVRCR). The chain crosses the membrane as a helical span at residues 40-62 (MLSTSDMIVACLAASRFCLHGVA). At 63-81 (MANNLLASLDFSRAVPYMN) the chain is on the extracellular side. The chain crosses the membrane as a helical span at residues 82-104 (IFWDLFNALTLWFTALLAAFYCV). Topologically, residues 105 to 127 (KISSFSHPTFAWLKWRISRLVPK) are cytoplasmic. Residues 128-150 (LIKGSLIICGLEVISSATGNILF) traverse the membrane as a helical segment. Residues 151–182 (GQRKVSLSSYRNETLVYRVQASFQLYFFLYDG) are Extracellular-facing. N-linked (GlcNAc...) asparagine glycosylation is present at Asn-162. The chain crosses the membrane as a helical span at residues 183 to 205 (FVWSIPFLLFLVSTVLLIVSLCW). The Cytoplasmic segment spans residues 206–231 (QLGQMRDLRPGPCDPSTQAYTMALKS). Residues 232–254 (LTFSLIFCTLYFLSLFASALKII) traverse the membrane as a helical segment. At 255 to 258 (NFQN) the chain is on the extracellular side. A helical transmembrane segment spans residues 259-281 (HWHWAWEVLIYANICLHSTVLVL). The Cytoplasmic segment spans residues 282–312 (RSPKLKKGLKTWPQLQCPCDAGSQGFGRCWP).

This sequence belongs to the G-protein coupled receptor T2R family.

The protein localises to the membrane. Its function is as follows. Receptor that may play a role in the perception of bitterness and is gustducin-linked. May play a role in sensing the chemical composition of the gastrointestinal content. The activity of this receptor may stimulate alpha gustducin, mediate PLC-beta-2 activation and lead to the gating of TRPM5. This chain is Taste receptor type 2 member 62 (TAS2R62), found in Pan paniscus (Pygmy chimpanzee).